Consider the following 1595-residue polypeptide: Pentafunctional AROM polypeptide (1595 aa).

Positions 1–384 are 3-dehydroquinate synthase; it reads MGVPTKISIL…HEPRASTVSN (384 aa). NAD(+) is bound by residues 44–46, 81–84, 114–116, and Asp119; these read DTN, ESSK, and GGV. Position 130 (Arg130) interacts with 7-phospho-2-dehydro-3-deoxy-D-arabino-heptonate. 139–140 is an NAD(+) binding site; the sequence is TT. 7-phospho-2-dehydro-3-deoxy-D-arabino-heptonate is bound by residues Asp146 and Lys152. NAD(+) is bound at residue Lys161. Asn162 serves as a coordination point for 7-phospho-2-dehydro-3-deoxy-D-arabino-heptonate. Residues 179-182 and Asn190 each bind NAD(+); that span reads FLNT. Residue Glu194 coordinates Zn(2+). Residues 194 to 197 and Lys250 contribute to the 7-phospho-2-dehydro-3-deoxy-D-arabino-heptonate site; that span reads EVIK. The active-site Proton acceptor; for 3-dehydroquinate synthase activity is Glu260. Residues 264 to 268 and His271 each bind 7-phospho-2-dehydro-3-deoxy-D-arabino-heptonate; that span reads RNLLN. His271 serves as a coordination point for Zn(2+). The active-site Proton acceptor; for 3-dehydroquinate synthase activity is His275. Residues His287 and Lys356 each contribute to the 7-phospho-2-dehydro-3-deoxy-D-arabino-heptonate site. His287 is a binding site for Zn(2+). The EPSP synthase stretch occupies residues 397 to 842; it reads VSPGVPKGLD…WDSLAQTFKV (446 aa). The active-site For EPSP synthase activity is Cys824. A shikimate kinase region spans residues 866–1057; the sequence is ASIFIIGMRG…RRKENTFFVS (192 aa). An ATP-binding site is contributed by 872-879; the sequence is GMRGAGKT. The tract at residues 1058-1278 is 3-dehydroquinase; the sequence is LTLPDLGLAA…AAPGQLSARE (221 aa). His1181 serves as the catalytic Proton acceptor; for 3-dehydroquinate dehydratase activity. Lys1209 acts as the Schiff-base intermediate with substrate; for 3-dehydroquinate dehydratase activity in catalysis. Residues 1291–1595 are shikimate dehydrogenase; sequence AKKFAVIGNP…MGVLPSEDIS (305 aa).

It in the N-terminal section; belongs to the sugar phosphate cyclases superfamily. Dehydroquinate synthase family. This sequence in the 2nd section; belongs to the EPSP synthase family. In the 3rd section; belongs to the shikimate kinase family. The protein in the 4th section; belongs to the type-I 3-dehydroquinase family. It in the C-terminal section; belongs to the shikimate dehydrogenase family. As to quaternary structure, homodimer. Requires Zn(2+) as cofactor.

The protein localises to the cytoplasm. The catalysed reaction is 7-phospho-2-dehydro-3-deoxy-D-arabino-heptonate = 3-dehydroquinate + phosphate. The enzyme catalyses 3-dehydroquinate = 3-dehydroshikimate + H2O. It carries out the reaction shikimate + NADP(+) = 3-dehydroshikimate + NADPH + H(+). It catalyses the reaction shikimate + ATP = 3-phosphoshikimate + ADP + H(+). The catalysed reaction is 3-phosphoshikimate + phosphoenolpyruvate = 5-O-(1-carboxyvinyl)-3-phosphoshikimate + phosphate. It participates in metabolic intermediate biosynthesis; chorismate biosynthesis; chorismate from D-erythrose 4-phosphate and phosphoenolpyruvate: step 2/7. It functions in the pathway metabolic intermediate biosynthesis; chorismate biosynthesis; chorismate from D-erythrose 4-phosphate and phosphoenolpyruvate: step 3/7. The protein operates within metabolic intermediate biosynthesis; chorismate biosynthesis; chorismate from D-erythrose 4-phosphate and phosphoenolpyruvate: step 4/7. Its pathway is metabolic intermediate biosynthesis; chorismate biosynthesis; chorismate from D-erythrose 4-phosphate and phosphoenolpyruvate: step 5/7. It participates in metabolic intermediate biosynthesis; chorismate biosynthesis; chorismate from D-erythrose 4-phosphate and phosphoenolpyruvate: step 6/7. Its function is as follows. The AROM polypeptide catalyzes 5 consecutive enzymatic reactions in prechorismate polyaromatic amino acid biosynthesis. The protein is Pentafunctional AROM polypeptide of Ajellomyces capsulatus (strain H143) (Darling's disease fungus).